An 851-amino-acid chain; its full sequence is DNA mismatch repair protein MutS (851 aa).

Residue 614 to 621 (GPNMGGKS) coordinates ATP.

This sequence belongs to the DNA mismatch repair MutS family.

Functionally, this protein is involved in the repair of mismatches in DNA. It is possible that it carries out the mismatch recognition step. This protein has a weak ATPase activity. The chain is DNA mismatch repair protein MutS from Serratia proteamaculans (strain 568).